Reading from the N-terminus, the 94-residue chain is DNA-directed RNA polymerase subunit omega (94 aa).

It belongs to the RNA polymerase subunit omega family. As to quaternary structure, the RNAP catalytic core consists of 2 alpha, 1 beta, 1 beta' and 1 omega subunit. When a sigma factor is associated with the core the holoenzyme is formed, which can initiate transcription.

The enzyme catalyses RNA(n) + a ribonucleoside 5'-triphosphate = RNA(n+1) + diphosphate. Promotes RNA polymerase assembly. Latches the N- and C-terminal regions of the beta' subunit thereby facilitating its interaction with the beta and alpha subunits. This Bifidobacterium longum (strain DJO10A) protein is DNA-directed RNA polymerase subunit omega.